Here is a 228-residue protein sequence, read N- to C-terminus: uncharacterized protein (228 aa).

This is an uncharacterized protein from Methanocaldococcus jannaschii (strain ATCC 43067 / DSM 2661 / JAL-1 / JCM 10045 / NBRC 100440) (Methanococcus jannaschii).